We begin with the raw amino-acid sequence, 1277 residues long: Neural cell adhesion molecule L1 (1277 aa).

Positions 1–34 are cleaved as a signal peptide; sequence MAHTQRQQGGSRGQWSRCLLLLLLLPLAAQPGRA. The Extracellular portion of the chain corresponds to 35–1135; sequence AIQIPSSYYI…VQPSFATQGW (1101 aa). 5 Ig-like C2-type domains span residues 51-140, 150-241, 256-344, 349-437, and 443-528; these read PAIT…TAVS, PPVQ…EPIT, PQMM…YTVT, PYWT…TNVY, and PQIL…AEVE. Disulfide bonds link Cys-72–Cys-129, Cys-173–Cys-224, Cys-280–Cys-328, Cys-370–Cys-421, and Cys-465–Cys-514. N-linked (GlcNAc...) asparagine glycosylation is present at Asn-317. Asn-503, Asn-520, and Asn-531 each carry an N-linked (GlcNAc...) asparagine glycan. The region spanning 532-623 is the Ig-like C2-type 6 domain; sequence RTVILSPPQA…DMVEASSTLT (92 aa). Cysteines 554 and 607 form a disulfide. 5 Fibronectin type-III domains span residues 630 to 725, 730 to 824, 829 to 931, 935 to 1030, and 1032 to 1129; these read PPVH…TPAD, NPED…SGED, APLN…TPEG, PPMS…TLEG, and PPAN…VQPS. The tract at residues 714–740 is disordered; it reads SKLSDLYKTPADAPDSNPEDVRSESTD. N-linked (GlcNAc...) asparagine glycans are attached at residues Asn-794 and Asn-839. N-linked (GlcNAc...) asparagine glycans are attached at residues Asn-1035, Asn-1046, Asn-1068, Asn-1083, and Asn-1108. A helical transmembrane segment spans residues 1136 to 1156; it reads FIGVVSAVVLLLLVLLILCFI. Residues 1157-1277 are Cytoplasmic-facing; sequence KRSKGGKYSV…ATNGAPSFLN (121 aa). Disordered stretches follow at residues 1163–1216 and 1232–1277; these read KYSV…LCSE and NMDE…SFLN. Residues 1165 to 1201 are compositionally biased toward basic and acidic residues; it reads SVKDKEDGPMDSEARPMKDETFGEYRSLESDLEEKRT. Positions 1232-1242 are enriched in polar residues; the sequence is NMDESLASQFS. Residues 1255–1277 show a composition bias toward low complexity; the sequence is PDNSPLNPAANPPATNGAPSFLN.

It belongs to the immunoglobulin superfamily. L1/neurofascin/NgCAM family.

The protein localises to the cell membrane. It is found in the cell projection. Its subcellular location is the growth cone. In terms of biological role, neural cell adhesion molecule involved in the dynamics of cell adhesion and in the generation of transmembrane signals at tyrosine kinase receptors. During brain development, critical in multiple processes, including neuronal migration, axonal growth and fasciculation, and synaptogenesis. In the mature brain, plays a role in the dynamics of neuronal structure and function, including synaptic plasticity. This is Neural cell adhesion molecule L1 (l1cam) from Takifugu rubripes (Japanese pufferfish).